Reading from the N-terminus, the 251-residue chain is Triosephosphate isomerase (251 aa).

9–11 (NWK) serves as a coordination point for substrate. Histidine 95 (electrophile) is an active-site residue. Residue glutamate 167 is the Proton acceptor of the active site. Substrate contacts are provided by residues glycine 173, serine 212, and 233-234 (GG).

Belongs to the triosephosphate isomerase family. In terms of assembly, homodimer.

It localises to the cytoplasm. It catalyses the reaction D-glyceraldehyde 3-phosphate = dihydroxyacetone phosphate. Its pathway is carbohydrate biosynthesis; gluconeogenesis. The protein operates within carbohydrate degradation; glycolysis; D-glyceraldehyde 3-phosphate from glycerone phosphate: step 1/1. Its function is as follows. Involved in the gluconeogenesis. Catalyzes stereospecifically the conversion of dihydroxyacetone phosphate (DHAP) to D-glyceraldehyde-3-phosphate (G3P). This chain is Triosephosphate isomerase, found in Pseudomonas syringae pv. tomato (strain ATCC BAA-871 / DC3000).